Reading from the N-terminus, the 406-residue chain is Enoyl-[acyl-carrier-protein] reductase [NADH] (406 aa).

NAD(+) is bound by residues 48–53 (GASTGF), 74–75 (FE), 111–112 (DA), and 140–141 (IA). Position 226 (Y226) interacts with substrate. Y236 acts as the Proton donor in catalysis. Residues K245 and 275 to 277 (LVT) contribute to the NAD(+) site.

It belongs to the TER reductase family. As to quaternary structure, monomer.

It catalyses the reaction a 2,3-saturated acyl-[ACP] + NAD(+) = a (2E)-enoyl-[ACP] + NADH + H(+). It functions in the pathway lipid metabolism; fatty acid biosynthesis. Its function is as follows. Involved in the final reduction of the elongation cycle of fatty acid synthesis (FAS II). Catalyzes the reduction of a carbon-carbon double bond in an enoyl moiety that is covalently linked to an acyl carrier protein (ACP). In Coxiella burnetii (strain RSA 331 / Henzerling II), this protein is Enoyl-[acyl-carrier-protein] reductase [NADH].